The primary structure comprises 129 residues: Translation initiation factor 5A (129 aa).

Hypusine is present on lysine 36.

It belongs to the eIF-5A family.

It localises to the cytoplasm. Functions by promoting the formation of the first peptide bond. This chain is Translation initiation factor 5A (eif5a), found in Thermoplasma acidophilum (strain ATCC 25905 / DSM 1728 / JCM 9062 / NBRC 15155 / AMRC-C165).